A 149-amino-acid chain; its full sequence is Calmodulin (149 aa).

EF-hand domains lie at 8-43 (EQIS…LGQN), 44-79 (PTEA…KMQD), 81-116 (DSEE…LGEK), and 117-149 (LTDE…MMSK). Residues Asp21, Asp23, Asp25, Thr27, Glu32, Asp57, Asp59, Ser61, Thr63, Glu68, Asp94, Asp96, Asn98, and Glu105 each coordinate Ca(2+). Lys116 bears the N6,N6,N6-trimethyllysine mark. The Ca(2+) site is built by Asp130, Asp132, Asp134, Gln136, and Glu141.

Belongs to the calmodulin family.

Calmodulin mediates the control of a large number of enzymes, ion channels and other proteins by Ca(2+). Among the enzymes to be stimulated by the calmodulin-Ca(2+) complex are a number of protein kinases and phosphatases. The polypeptide is Calmodulin (Trypanosoma brucei brucei).